The following is a 98-amino-acid chain: Large ribosomal subunit protein bL28 (98 aa).

Belongs to the bacterial ribosomal protein bL28 family.

The polypeptide is Large ribosomal subunit protein bL28 (Beijerinckia indica subsp. indica (strain ATCC 9039 / DSM 1715 / NCIMB 8712)).